Reading from the N-terminus, the 481-residue chain is Protein DETOXIFICATION 12 (481 aa).

A run of 12 helical transmembrane segments spans residues 38–58, 76–96, 117–137, 154–174, 187–207, 214–234, 267–287, 296–316, 336–356, 380–400, 415–435, and 438–458; these read LIFFAAPMAAVVIAQFMLQIV, LASSFCNVTGFSFIIGLSCAL, YTAMFCLALVCLPLSLIWFNM, AGKYATWLIPGLFAYAVLQPL, LLITSYVVFCIHVPLCWFLVY, LGGALAISLSNWLYAIFLGSF, AAMICLEWWSYELIILLSGLL, VLSVCLQTISTMYSIPLAIAA, IVVYAAMSLAVIDALIVSMSL, MAPLVSISLMLDALQGVLSGI, LGAFYLWGIPIAASLAFWIHL, and VGLWIGIQAGAVLQTLLLALV.

The protein belongs to the multi antimicrobial extrusion (MATE) (TC 2.A.66.1) family.

It localises to the membrane. The sequence is that of Protein DETOXIFICATION 12 from Arabidopsis thaliana (Mouse-ear cress).